The following is a 225-amino-acid chain: Fibroblast growth factor 11 (225 aa).

Residues 1 to 28 (MAALASSLIRQKREVREPGGSRPVSAQR) form a disordered region.

Belongs to the heparin-binding growth factors family. In terms of tissue distribution, brain and eye, and in a segmental pattern of the embryonic body wall. In adult olfactory bulb, hippocampus and most concentrated in Purkinje cell layer of the cerebellum.

It localises to the nucleus. Probably involved in nervous system development and function. This is Fibroblast growth factor 11 (Fgf11) from Mus musculus (Mouse).